Here is a 168-residue protein sequence, read N- to C-terminus: G/U mismatch-specific DNA glycosylase (168 aa).

This sequence belongs to the uracil-DNA glycosylase (UDG) superfamily. TDG/mug family. In terms of assembly, binds DNA as a monomer.

It localises to the cytoplasm. It catalyses the reaction Specifically hydrolyzes mismatched double-stranded DNA and polynucleotides, releasing free uracil.. Its function is as follows. Excises ethenocytosine and uracil, which can arise by alkylation or deamination of cytosine, respectively, from the corresponding mispairs with guanine in ds-DNA. It is capable of hydrolyzing the carbon-nitrogen bond between the sugar-phosphate backbone of the DNA and the mispaired base. The complementary strand guanine functions in substrate recognition. Required for DNA damage lesion repair in stationary-phase cells. This chain is G/U mismatch-specific DNA glycosylase, found in Escherichia coli O9:H4 (strain HS).